The primary structure comprises 127 residues: uncharacterized protein (127 aa).

The first 23 residues, 1–23 (MAGVRARAPLPLALLLSLPAAPG), serve as a signal peptide directing secretion. Residues 43 to 127 (CFEVGLRKPP…ACPPRAPLWR (85 aa)) are disordered. Positions 59–70 (PPSFSSGSSRPL) are enriched in low complexity.

It is found in the secreted. This is an uncharacterized protein from Homo sapiens (Human).